A 328-amino-acid polypeptide reads, in one-letter code: Malate dehydrogenase (328 aa).

11–17 (GAAGQIG) is an NAD(+) binding site. Residues Arg-94 and Arg-100 each contribute to the substrate site. Residues Asn-107, Gln-114, and 131–133 (VGN) each bind NAD(+). 2 residues coordinate substrate: Asn-133 and Arg-164. The active-site Proton acceptor is the His-189.

The protein belongs to the LDH/MDH superfamily. MDH type 2 family.

It carries out the reaction (S)-malate + NAD(+) = oxaloacetate + NADH + H(+). Its function is as follows. Catalyzes the reversible oxidation of malate to oxaloacetate. The protein is Malate dehydrogenase of Xanthomonas euvesicatoria pv. vesicatoria (strain 85-10) (Xanthomonas campestris pv. vesicatoria).